Here is a 136-residue protein sequence, read N- to C-terminus: Protein scalloped (136 aa).

It is found in the nucleus. Its function is as follows. Probable transcription factor that function in the regulation of cell-specific gene expression during drosophila development, particularly in the differentiation of the nervous system. In Junonia coenia (Peacock butterfly), this protein is Protein scalloped (SD).